We begin with the raw amino-acid sequence, 699 residues long: SPX domain-containing membrane protein At4g22990 (699 aa).

The 144-residue stretch at 2 to 145 folds into the SPX domain; sequence VAFGKKLKER…GYRFTNYYVK (144 aa). Helical transmembrane passes span 249 to 269, 280 to 300, 317 to 337, 339 to 358, 377 to 397, and 413 to 433; these read FMSL…TYII, LGAA…AQLF, LIFS…AFDF, SIAV…ARAV, AGFV…AGLL, and LPGW…AISF. Over residues 475–490 the composition is skewed to acidic residues; the sequence is IEEQGEDECDGSEEAS. Residues 475-494 form a disordered region; it reads IEEQGEDECDGSEEASEDSR. The next 5 membrane-spanning stretches (helical) occupy residues 515–535, 546–566, 578–598, 606–626, and 671–691; these read LLIY…SSVI, SVAI…LVVG, ILLV…HVVV, VCSG…NLSL, and MLLN…IVAT.

Belongs to the major facilitator superfamily.

The protein resides in the membrane. The sequence is that of SPX domain-containing membrane protein At4g22990 from Arabidopsis thaliana (Mouse-ear cress).